A 266-amino-acid polypeptide reads, in one-letter code: Undecaprenyl-diphosphatase (266 aa).

8 helical membrane passes run 1–21, 40–60, 90–110, 113–133, 145–165, 188–208, 217–237, and 245–265; these read MTLL…FLPV, LPLY…LVVL, LLVV…KPIF, LNQP…LWFT, LSWL…IPGI, FSFL…IDEV, PLLG…LWLF, and FKWF…KVAM.

This sequence belongs to the UppP family.

It localises to the cell inner membrane. It carries out the reaction di-trans,octa-cis-undecaprenyl diphosphate + H2O = di-trans,octa-cis-undecaprenyl phosphate + phosphate + H(+). Functionally, catalyzes the dephosphorylation of undecaprenyl diphosphate (UPP). Confers resistance to bacitracin. This chain is Undecaprenyl-diphosphatase, found in Acaryochloris marina (strain MBIC 11017).